Here is a 379-residue protein sequence, read N- to C-terminus: L-demethylnoviosyl transferase (379 aa).

Belongs to the glycosyltransferase 28 family.

The catalysed reaction is dTDP-4-O-demethyl-beta-L-noviose + novobiocic acid = desmethyldescarbamoylnovobiocin + dTDP + H(+). It functions in the pathway antibiotic biosynthesis; novobiocin biosynthesis. Inhibited by TDP-L-rhamnose, the sugar donor that most closely structurally resembles the natural substrate dTDP-beta-L-noviose. In terms of biological role, catalyzes the transfer of L-noviose from dTDP-4-O-demethyl-beta-L-noviose to the phenolic oxygen of novobiocic acid, creating the full ABC ring system in the novobiocin biosynthesis pathway. Novobiocin is an aminocoumarin family antibiotic that targets bacterial DNA gyrases. Also shows activity with variant coumarin aglycones, suggesting it may be a promiscuous catalyst for noviosylation of a range of planar scaffolds. Does not show activity with TDP-L-rhamnose. This Streptomyces niveus (Streptomyces spheroides) protein is L-demethylnoviosyl transferase (novM).